Reading from the N-terminus, the 1442-residue chain is Death-associated protein kinase 1 (1442 aa).

One can recognise a Protein kinase domain in the interval 13–275 (YDTGEELGSG…IQDSLQHPWI (263 aa)). ATP-binding positions include 19 to 27 (LGSGQFAVV) and Lys-42. Asp-139 serves as the catalytic Proton acceptor. Residues 267–334 (QDSLQHPWIK…RSNMSVARSD (68 aa)) are calmodulin-binding. Position 289 is a phosphoserine; by RPS6KA1 and RPS6KA3 (Ser-289). The segment at 292-301 (NMEKFKKFAA) is autoinhibitory domain. Ser-308 carries the post-translational modification Phosphoserine; by autocatalysis. Phosphoserine is present on residues Ser-319 and Ser-333. 8 ANK repeats span residues 378–407 (HGTPPLLIAAGCGNIQMLQLLIKRGSRIDV), 411–440 (GGSNAIYWASRHGHVDTLKFLNENKCPLDV), 444–473 (SGETALHVAARYGHADVVQLLCSFGSNPDF), 477–506 (EEETPLHCAAWHGYYSVAKALCEVGCNVNI), 510–539 (EGETPLLTASARGYHDIVECLAEHGADLNA), 543–572 (DGHIALHLAVRRCQMEVIKTLLGHGSFVDF), 576–605 (HGNTPLHVACKDGSAPIVVALCEASCNLDI), and 609–638 (YGRTPLHLAANNGILDVVRYLCLMGANVEA). The Roc domain occupies 681–955 (TQNLQPRIKL…NHLQEIRSQI (275 aa)). Ser-734 carries the phosphoserine; by MAPK1 modification. An ANK 9 repeat occupies 875–904 (KLKNPLRVVLVATHADIMNIPRPAGGEFGY). Position 1115 is a phosphoserine (Ser-1115). One copy of the ANK 10 repeat lies at 1164 to 1196 (DADIRLWVSGCRIANRGAELLVLLVNHGQGIEV). The Death domain maps to 1312–1396 (KLSRLLDPPD…DAADFLLKAS (85 aa)). Ser-1433 bears the Phosphoserine mark.

The protein belongs to the protein kinase superfamily. CAMK Ser/Thr protein kinase family. DAP kinase subfamily. As to quaternary structure, interacts with KLHL20. Interacts (via death domain) with MAPK1 and MAPK3. Interacts with MAP1B (via N-terminus). Interacts with PRKD1 in an oxidative stress-regulated manner. Interacts with PIN1, PDCD6, BECN1, TSC2 and STX1A. Interacts (via kinase domain) with DAPK3 (via kinase domain). Interacts with GRINB. Interacts (via death domain) with UNC5B (via death domain). Interacts with UNC5C (via death domain). Mg(2+) serves as cofactor. In terms of processing, ubiquitinated by the BCR(KLHL20) E3 ubiquitin ligase complex, leading to its degradation by the proteasome. Post-translationally, in response to mitogenic stimulation (PMA or EGF), phosphorylated at Ser-289; phosphorylation suppresses DAPK1 pro-apoptotic function. Autophosphorylation at Ser-308 inhibits its catalytic activity. Phosphorylation at Ser-734 by MAPK1 increases its catalytic activity and promotes cytoplasmic retention of MAPK1. Endoplasmic-stress can cause dephosphorylation at Ser-308. In terms of tissue distribution, high levels in bladder, uterus, vas deferens, lung, liver and kidney.

It carries out the reaction L-seryl-[protein] + ATP = O-phospho-L-seryl-[protein] + ADP + H(+). The catalysed reaction is L-threonyl-[protein] + ATP = O-phospho-L-threonyl-[protein] + ADP + H(+). With respect to regulation, activated by Ca(2+)/calmodulin. Regulated by a locking mechanism, involving autophosphorylation at Ser-308 and calmodulin binding. In the inactive state, Ser-308 is phosphorylated. Activation involves its dephosphorylation and a release-of-autoinhibition mechanism where binding of calmodulin induces a conformational change that relieves the steric block of the active site by the autoinhibitory domain. Activity is modulated by UNC5B and NTN1. UNC5B activates it by inhibiting the phosphorylation at Ser-308, whereas NTN1 inhibits UNC5B-mediated activation of DAPK1. Endoplasmic-stress activates by causing Ser-308 dephosphorylation. Calcium/calmodulin-dependent serine/threonine kinase involved in multiple cellular signaling pathways that trigger cell survival, apoptosis, and autophagy. Regulates both type I apoptotic and type II autophagic cell deaths signal, depending on the cellular setting. The former is caspase-dependent, while the latter is caspase-independent and is characterized by the accumulation of autophagic vesicles. Phosphorylates PIN1 resulting in inhibition of its catalytic activity, nuclear localization, and cellular function. Phosphorylates TPM1, enhancing stress fiber formation in endothelial cells. Phosphorylates STX1A and significantly decreases its binding to STXBP1. Phosphorylates PRKD1 and regulates JNK signaling by binding and activating PRKD1 under oxidative stress. Phosphorylates BECN1, reducing its interaction with BCL2 and BCL2L1 and promoting the induction of autophagy. Phosphorylates TSC2, disrupting the TSC1-TSC2 complex and stimulating mTORC1 activity in a growth factor-dependent pathway. Phosphorylates RPS6, MYL9 and DAPK3. Acts as a signaling amplifier of NMDA receptors at extrasynaptic sites for mediating brain damage in stroke. Cerebral ischemia recruits DAPK1 into the NMDA receptor complex and it phosphorylates GRINB at Ser-1303 inducing injurious Ca(2+) influx through NMDA receptor channels, resulting in an irreversible neuronal death. Required together with DAPK3 for phosphorylation of RPL13A upon interferon-gamma activation which is causing RPL13A involvement in transcript-selective translation inhibition. This is Death-associated protein kinase 1 (Dapk1) from Mus musculus (Mouse).